The primary structure comprises 59 residues: Large ribosomal subunit protein uL30 (59 aa).

Belongs to the universal ribosomal protein uL30 family. Part of the 50S ribosomal subunit.

The polypeptide is Large ribosomal subunit protein uL30 (Citrobacter koseri (strain ATCC BAA-895 / CDC 4225-83 / SGSC4696)).